The chain runs to 535 residues: Calcium-dependent protein kinase 1 (535 aa).

A disordered region spans residues 1 to 34 (MGCNQSKSANDVRGNKVNNVNSKKKNNKREDIND). G2 is lipidated: N-myristoyl glycine. A lipid anchor (S-palmitoyl cysteine) is attached at C3. A Protein kinase domain is found at 57-324 (YFKVRKLGSG…AEEALNSRWI (268 aa)). ATP-binding positions include 63–71 (LGSGAYGEV) and K86. Residue S65 is modified to Phosphoserine. The residue at position 117 (S117) is a Phosphoserine. D190 serves as the catalytic Proton acceptor. A phosphoserine mark is found at S216 and S219. T230 is subject to Phosphothreonine. S334 bears the Phosphoserine mark. Residues 345–352 (NMRKFEGS) carry the J domain autoinhibitory motif motif. A j domain region spans residues 345–363 (NMRKFEGSQKLAQAAILFI). A J domain interacts with the EF-hand domains motif is present at residues 353–363 (QKLAQAAILFI). EF-hand domains lie at 371 to 406 (EERK…LRNF), 415 to 450 (NVEE…KQIL), 451 to 486 (FSEE…GFYF), and 497 to 532 (VSEK…ICDN). 20 residues coordinate Ca(2+): D384, N386, D388, Q390, E395, D428, D430, N432, Y434, E439, D464, D466, S468, K470, E475, D510, N512, D514, M516, and E521.

Belongs to the protein kinase superfamily. Ser/Thr protein kinase family. CDPK subfamily. Monomer. The cofactor is Mg(2+). In terms of processing, myristoylated. Myristoylation and palmitoylation are required for the localization to the parasitophorous vacuole membrane. Palmitoylated. Palmitoylation increases in merozoites in response to low level of extracellular K(+) in the host blood. Myristoylation and palmitoylation are required for the localization to the parasitophorous vacuole membrane. Post-translationally, phosphorylation at Thr-230 may regulate CDPK1 kinase activity. Phosphorylation increases in response to an increase in intracellular Ca(2+) levels. Autophosphorylated in vitro. Autophosphorylation does not affect membrane localization in vitro.

It is found in the membrane. It localises to the cell membrane. The protein resides in the parasitophorous vacuole membrane. The protein localises to the cytoplasm. Its subcellular location is the cell projection. It is found in the cilium. It localises to the flagellum. The protein resides in the host cell membrane. The catalysed reaction is L-seryl-[protein] + ATP = O-phospho-L-seryl-[protein] + ADP + H(+). It catalyses the reaction L-threonyl-[protein] + ATP = O-phospho-L-threonyl-[protein] + ADP + H(+). Its activity is regulated as follows. Activated by calcium. Upon calcium binding to the EF-hand domains, the C-terminus of the junction domain (J domain) undergoes a conformational change which results in the dissociation of the pseudo-substrate inhibitory motif from the catalytic domain. This, in turn may facilitate the autophosphorylation of the activation loop at Thr-230, which leads to the kinase activation. Calcium-dependent protein kinase which acts as a sensor and effector of intracellular Ca(2+) levels probably in part downstream of cGMP-activated PKG kinase. During the liver stage, involved in sporozoite motility and thus in sporozoite invasion of host hepatocytes, probably together with CDPK4 and CDPK5. In the mosquito midgut and during the last stage of male gamete exflagellation, may play a role in the rupture of the host erythrocyte membrane. In the mosquito midgut, required for the differentiation of the zygote into the ookinete by promoting the translational activation of a subset of repressed mRNAs; these mRNAs are kept repressed in the zygote by the DOZI- or CITH-containing mRNP complexes. Dispensable during the asexual blood stage. The sequence is that of Calcium-dependent protein kinase 1 from Plasmodium yoelii yoelii.